Consider the following 639-residue polypeptide: Chaperone protein DnaK (639 aa).

Position 198 is a phosphothreonine; by autocatalysis (threonine 198). A disordered region spans residues 597–639; that stretch reads AYSAGQSAEGAPHAAGAEASAQSRTDDGVVDADFEEVDEKKGH. The segment covering 603–617 has biased composition (low complexity); that stretch reads SAEGAPHAAGAEASA. Residues 624 to 633 are compositionally biased toward acidic residues; sequence GVVDADFEEV.

The protein belongs to the heat shock protein 70 family.

Acts as a chaperone. This chain is Chaperone protein DnaK, found in Rhodospirillum rubrum (strain ATCC 11170 / ATH 1.1.1 / DSM 467 / LMG 4362 / NCIMB 8255 / S1).